Reading from the N-terminus, the 1431-residue chain is MGKEQELVQAVKAEDVGTAQRLLQRPRPGKAKLLGSTKKINVNFQDPDGFSALHHAALNGNTELISLLLEAQAAVDIKDNKGMRPLHYAAWQGRKEPMKLVLKAGSAVNVPSDEGHIPLHLAAQHGHYDVSEMLLQHQSNPCMVDNSGKTPLDLACEFGRVGVVQLLLSSNMCAALLEPRPGDTTDPNGTSPLHLAAKNGHIDIIRLLLQAGIDINRQTKSGTALHEAALCGKTEVVRLLLDSGINAQVRNTYSQTALDIVHQFTTSQASKEIKQLLREASAALQVRATKDYCNNYDLTSLNVKAGDIITVLEQHPDGRWKGCIHDNRTGNDRVGYFPSSLGEAIVKRAGSRTGSEPSPPQGGGSLGPSAPPEEIWVLRKPFAGGDRSGSLSNVAGGRSTGGHALHAGSEGVKLLATVLSQKSVSESSPGDSPVKPPEGSSGAARSQPPAAHAGQVYGEQPPKKLESASASASEGKSAEAVSQWLATFQLQLYAPNFTSAGYDLPTISRMTPEDLTAIGVTKPGHRKKITAEISGLNIPDWLPEHKPANLAVWLSMIGLAQYYKVLVDNGYENIDFITDITWEDLQEIGITKLGHQKKLMLAVRKLAELQKAEYSKYEGGPLRRKTPQSLEMMAIESPPPSEPAAAECQSPKMTTFQDSELSGELQAALSGPAEAGAAAVEKSSNHLPPTPRTTSRESSLSGRARHISSSQELLGDGPPGPGSPMSRSQEYLLDEGMAPGTPPKEVRSSRHGHSVKRASVPPVPGKPRQVLPSGASHFTPPQTPTKAQPGSPQALGGPHGPATAKVKPTPQLLPPTDRPMSPRSLPQSPTHRGFAYVLPQPVEGEVGPPAPGPAPPPVPAAVPTLCLPPETDVEPGRPKKRAHSLNRYAASDSEPERDELLVPAAAGPYATVQRRVGRSHSVRAPAGTDKNVNRSQSFAVRPRKKGPPPPPPKRSSSAMASANLADEPAPDVEAEDGRLGVRAQRRRASDLAGSVDTGSAGSVKSIAAMLELSSIGGGGRAIRRPPEGHPTPRPASPEPGRVATVLASVKHKEAIGPDGEVVNRRRTLSGPVTGLLATARRGSGEPAEQSHFMEDGTARQRLRGPAKGEASAEGPPLARVEASATLKRRIRAKQSQQENVKFILTESDTVKRRPKAKEPDTGPEPPPPLSVYQNGTATVRRRPTSEQAGPPELPPPPPPAEPPPADLMQLPPLPLPDGNARKPVKPPVSPKPILSQPVSKIQGSPTPASKKVPLPGPGSPEVKRAHGTPPPVSPKPPPPPTAPKPAKALAGLQSSSATPSPVPSPARQPPAALIKPASSPPSQSASPVKPPSPGTPALHVPAKPPRAAASVVSGPPVASDCASPGDSARQKLEETSACLAAALQAVEEKIRQEDGQGPRPSSIEEKSTGSILEDIGSMFDDLADQLDAMLE.

6 ANK repeats span residues 48-77 (DGFSALHHAALNGNTELISLLLEAQAAVDI), 81-110 (KGMRPLHYAAWQGRKEPMKLVLKAGSAVNV), 114-143 (EGHIPLHLAAQHGHYDVSEMLLQHQSNPCM), 147-176 (SGKTPLDLACEFGRVGVVQLLLSSNMCAAL), 188-217 (NGTSPLHLAAKNGHIDIIRLLLQAGIDINR), and 220-249 (KSGTALHEAALCGKTEVVRLLLDSGINAQV). Y253 is subject to Phosphotyrosine. In terms of domain architecture, SH3 spans 281-347 (SAALQVRATK…PSSLGEAIVK (67 aa)). A disordered region spans residues 348-372 (RAGSRTGSEPSPPQGGGSLGPSAPP). S358 carries the post-translational modification Phosphoserine. The interval 375–471 (IWVLRKPFAG…PKKLESASAS (97 aa)) is CASK-binding. Position 398 is an omega-N-methylarginine (R398). Over residues 420 to 430 (SQKSVSESSPG) the composition is skewed to polar residues. The interval 420-471 (SQKSVSESSPGDSPVKPPEGSSGAARSQPPAAHAGQVYGEQPPKKLESASAS) is disordered. 2 positions are modified to phosphoserine: S423 and S432. SAM domains lie at 476-539 (KSAE…LNIP) and 545-609 (HKPA…LAEL). 2 positions are modified to phosphoserine: S637 and S650. Residues 669-679 (LSGPAEAGAAA) show a composition bias toward low complexity. 2 disordered regions span residues 669 to 1000 (LSGP…TGSA) and 1016 to 1041 (GGGGRAIRRPPEGHPTPRPASPEPGR). Over residues 692-712 (RTTSRESSLSGRARHISSSQE) the composition is skewed to polar residues. A phosphoserine mark is found at S723 and S728. T741 is subject to Phosphothreonine. A Phosphoserine modification is found at S791. The span at 848 to 860 (PPAPGPAPPPVPA) shows a compositional bias: pro residues. 3 positions are modified to phosphoserine: S891, S893, and S989. A compositionally biased stretch (pro residues) spans 1028-1037 (GHPTPRPASP). At T1067 the chain carries Phosphothreonine. A Phosphoserine modification is found at S1069. Disordered regions lie at residues 1072–1372 (VTGL…RQKL) and 1389–1410 (KIRQEDGQGPRPSSIEEKSTGS). The span at 1148-1160 (DTVKRRPKAKEPD) shows a compositional bias: basic and acidic residues. Residues 1191-1215 (PELPPPPPPAEPPPADLMQLPPLPL) show a composition bias toward pro residues. The span at 1236-1247 (QPVSKIQGSPTP) shows a compositional bias: polar residues. Residue S1259 is modified to Phosphoserine. T1268 carries the post-translational modification Phosphothreonine. Positions 1268–1283 (TPPPVSPKPPPPPTAP) are enriched in pro residues. 3 stretches are compositionally biased toward low complexity: residues 1284-1299 (KPAKALAGLQSSSATP), 1309-1327 (PPAALIKPASSPPSQSASP), and 1345-1359 (PRAAASVVSGPPVAS). At S1363 the chain carries Phosphoserine. A compositionally biased stretch (basic and acidic residues) spans 1389 to 1407 (KIRQEDGQGPRPSSIEEKS).

Binds the CaM kinase domain of CASK. Forms a ternary complex with CASK and LIN7A, LIN7B or LIN7C. Competes with APBA1 that forms a similar complex with CASK and LIN7 proteins. The tripartite complex CASKIN1/CASK/LIN7(A/B/C) binds the cytoplasmic tail of NRXN1. Polymerizes, via the tandem SAM domains, to form long, 8 nM wide fibers, upon which other proteins can assemble.

The protein localises to the cytoplasm. Its function is as follows. May link the scaffolding protein CASK to downstream intracellular effectors. This chain is Caskin-1 (Caskin1), found in Mus musculus (Mouse).